Here is a 35-residue protein sequence, read N- to C-terminus: Alpha-amanitin proprotein 2 (35 aa).

Positions 1-10 are excised as a propeptide; the sequence is MFDTNSTRLP. Residue I11 is modified to (3R,4R)-4,5-dihydroxyisoleucine; in form alpha-amanitin. I11 is modified ((3R,4S)-4-hydroxyisoleucine; in form gamma-amanitin). Residues 11-18 constitute a cross-link (cyclopeptide (Ile-Pro)); the sequence is IWGIGCNP. Positions 12–16 form a cross-link, 2'-cysteinyl-6'-hydroxytryptophan sulfoxide (Trp-Cys); it reads WGIGC. Position 18 is a 4-hydroxyproline (P18). A propeptide spanning residues 19–35 is cleaved from the precursor; sequence WTAEHVDQTLVSGNDIC.

The protein belongs to the MSDIN fungal toxin family. Processed by the macrocyclase-peptidase enzyme POPB to yield a toxic bicyclic octapeptide. POPB first removes 10 residues from the N-terminus. Conformational trapping of the remaining peptide forces the enzyme to release this intermediate rather than proceed to macrocyclization. The enzyme rebinds the remaining peptide in a different conformation and catalyzes macrocyclization of the N-terminal 8 residues.

In terms of biological role, major toxin belonging to the bicyclic octapeptides amatoxins that acts by binding non-competitively to RNA polymerase II and greatly slowing the elongation of transcripts from target promoters. The chain is Alpha-amanitin proprotein 2 from Galerina marginata (strain CBS 339.88).